Here is a 584-residue protein sequence, read N- to C-terminus: Acetylcholinesterase (584 aa).

Alanine 1 is a signal peptide. Cysteine 70 and cysteine 97 are joined by a disulfide. Residue serine 204 is the Acyl-ester intermediate of the active site. An intrachain disulfide couples cysteine 258 to cysteine 273. Asparagine 266 carries an N-linked (GlcNAc...) asparagine glycan. Catalysis depends on glutamate 335, which acts as the Charge relay system. Asparagine 351 carries N-linked (GlcNAc...) asparagine glycosylation. An intrachain disulfide couples cysteine 410 to cysteine 530. Histidine 448 (charge relay system) is an active-site residue. Residue asparagine 465 is glycosylated (N-linked (GlcNAc...) asparagine).

The protein belongs to the type-B carboxylesterase/lipase family. In terms of assembly, homotetramer; composed of disulfide-linked homodimers. Interacts with PRIMA1. The interaction with PRIMA1 is required to anchor it to the basal lamina of cells and organize into tetramers.

The protein resides in the synapse. It is found in the secreted. The protein localises to the cell membrane. The enzyme catalyses acetylcholine + H2O = choline + acetate + H(+). In terms of biological role, terminates signal transduction at the neuromuscular junction by rapid hydrolysis of the acetylcholine released into the synaptic cleft. In Oryctolagus cuniculus (Rabbit), this protein is Acetylcholinesterase (ACHE).